A 497-amino-acid chain; its full sequence is Probable cytosol aminopeptidase (497 aa).

Residues lysine 267 and aspartate 272 each coordinate Mn(2+). Residue lysine 279 is part of the active site. 3 residues coordinate Mn(2+): aspartate 290, aspartate 349, and glutamate 351. Residue arginine 353 is part of the active site.

The protein belongs to the peptidase M17 family. Requires Mn(2+) as cofactor.

It localises to the cytoplasm. The catalysed reaction is Release of an N-terminal amino acid, Xaa-|-Yaa-, in which Xaa is preferably Leu, but may be other amino acids including Pro although not Arg or Lys, and Yaa may be Pro. Amino acid amides and methyl esters are also readily hydrolyzed, but rates on arylamides are exceedingly low.. The enzyme catalyses Release of an N-terminal amino acid, preferentially leucine, but not glutamic or aspartic acids.. Presumably involved in the processing and regular turnover of intracellular proteins. Catalyzes the removal of unsubstituted N-terminal amino acids from various peptides. This is Probable cytosol aminopeptidase from Syntrophotalea carbinolica (strain DSM 2380 / NBRC 103641 / GraBd1) (Pelobacter carbinolicus).